The primary structure comprises 363 residues: Disease resistance protein RBA1 (363 aa).

Residues 12 to 175 (PVPKVFLSFR…EIVKEVERVL (164 aa)) enclose the TIR domain. Residues 21-26 (RGEEIR) and G53 contribute to the NAD(+) site. The active site involves E86.

As to quaternary structure, homooligomer; homooligomerization is required for activity.

The protein localises to the cytoplasm. Its subcellular location is the nucleus. The protein resides in the nucleoplasm. It carries out the reaction NAD(+) + H2O = ADP-D-ribose + nicotinamide + H(+). The catalysed reaction is NADP(+) + H2O = ADP-D-ribose 2'-phosphate + nicotinamide + H(+). In terms of biological role, disease resistance (R) protein that specifically recognizes the HopBA1 type III effector protein from P.syringae, and triggers cell death. Acts as a NAD(+) hydrolase (NADase): in response to pathogen-recognition, catalyzes cleavage of NAD(+) into ADP-D-ribose (ADPR) and nicotinamide; NAD(+) cleavage triggering a defense system that promotes cell death. In addition to ADPR, also generates a cyclization variant of cyclic ADPR (cADPR), termed v-cADPR, for which the cyclizing bond is unknown. Also able to hydrolyze NADP(+), but not other NAD(+)-related molecules. This Arabidopsis thaliana (Mouse-ear cress) protein is Disease resistance protein RBA1.